The sequence spans 334 residues: Small ribosomal subunit protein uS2 (334 aa).

The protein belongs to the universal ribosomal protein uS2 family.

This Rhodopseudomonas palustris (strain BisB18) protein is Small ribosomal subunit protein uS2.